We begin with the raw amino-acid sequence, 509 residues long: Citrate synthase 3, peroxisomal (509 aa).

Residues histidine 319, histidine 358, and aspartate 414 contribute to the active site. The segment at 485–509 is disordered; it reads SKESDKLGQVATSNASRRRLAGSSV. The span at 500–509 shows a compositional bias: basic residues; that stretch reads SRRRLAGSSV.

Belongs to the citrate synthase family. In terms of tissue distribution, widely expressed. Expressed throughout the shoot. Expressed in flower, silique, stem, cauline leaf, young leaf, mature leaf and senescent leaf.

Its subcellular location is the peroxisome. It carries out the reaction oxaloacetate + acetyl-CoA + H2O = citrate + CoA + H(+). It participates in carbohydrate metabolism; tricarboxylic acid cycle; isocitrate from oxaloacetate: step 1/2. Peroxisomal citrate synthase required for the fatty acid respiration in seedlings, citrate being exported from peroxisomes into mitochondria during respiration of triacylglycerol (TAG). Indeed, complete respiration requires the transfer of carbon in the form of citrate from the peroxisome to the mitochondria. This is Citrate synthase 3, peroxisomal (CSY3) from Arabidopsis thaliana (Mouse-ear cress).